Consider the following 229-residue polypeptide: UPF0758 protein CA_C1241 (229 aa).

Residues 107-229 (KITSPKEAAN…YISLKEEGLL (123 aa)) enclose the MPN domain. Positions 178, 180, and 191 each coordinate Zn(2+). A JAMM motif motif is present at residues 178 to 191 (HNHPSGDPKPSNED).

It belongs to the UPF0758 family.

This chain is UPF0758 protein CA_C1241, found in Clostridium acetobutylicum (strain ATCC 824 / DSM 792 / JCM 1419 / IAM 19013 / LMG 5710 / NBRC 13948 / NRRL B-527 / VKM B-1787 / 2291 / W).